Reading from the N-terminus, the 412-residue chain is MIVDSISSSTASTSSSSPTRGTPIRKSLQCAVCGDVALGKHYGVNACNGCKGFFRRSIWKNRTYACRHGGKCLVAKEQRNACRSCRLTRCLDVGMNPRAVQGDTVEDPEWDEEAMPETLSISTQTDALKVKKKSHTSLFTLDIKKEQIIDNLRAIYARTDPEEFWKLTYPGTYDFRYAFHNTKVVSPRTPLTPTAERIATLNDVVADFRRAFVLFVDILKSIDQLRDVQEDDKMKIAKSRFAAFYWWLCSTWSAKAGCNGVCYSNGSYHPASISDMPKSEGKHGVRIDYSGVSQKSLENLVEPLRRMELSDEERIVGAVMVILADPVPNVSTKTEKILAEARDFYLELLGYCIKLPEEQQGIRVSTMVLLLASIMELVHLTTDNIQLSDVLHVIDLGDWSQELRDHRYRRQF.

Residues 1-19 show a composition bias toward low complexity; that stretch reads MIVDSISSSTASTSSSSPT. A disordered region spans residues 1-23; it reads MIVDSISSSTASTSSSSPTRGTP. Positions 27-102 form a DNA-binding region, nuclear receptor; it reads SLQCAVCGDV…VGMNPRAVQG (76 aa). 2 consecutive NR C4-type zinc fingers follow at residues 30-50 and 66-90; these read CAVCGDVALGKHYGVNACNGC and CRHGGKCLVAKEQRNACRSCRLTRC. Residues 144–407 form the NR LBD domain; that stretch reads KKEQIIDNLR…DWSQELRDHR (264 aa).

The protein belongs to the nuclear hormone receptor family.

The protein localises to the nucleus. Its function is as follows. Orphan nuclear receptor. The protein is Nuclear hormone receptor family member nhr-61 (nhr-61) of Caenorhabditis elegans.